A 155-amino-acid chain; its full sequence is Ribosomal RNA large subunit methyltransferase H (155 aa).

S-adenosyl-L-methionine is bound by residues L72, G103, and 122–127 (LSALTL).

This sequence belongs to the RNA methyltransferase RlmH family. Homodimer.

The protein localises to the cytoplasm. The enzyme catalyses pseudouridine(1915) in 23S rRNA + S-adenosyl-L-methionine = N(3)-methylpseudouridine(1915) in 23S rRNA + S-adenosyl-L-homocysteine + H(+). Functionally, specifically methylates the pseudouridine at position 1915 (m3Psi1915) in 23S rRNA. The protein is Ribosomal RNA large subunit methyltransferase H of Shigella boydii serotype 18 (strain CDC 3083-94 / BS512).